The following is a 146-amino-acid chain: Catabolic 3-dehydroquinase (146 aa).

The active-site Proton acceptor is tyrosine 24. Asparagine 78, histidine 84, and aspartate 91 together coordinate substrate. The Proton donor role is filled by histidine 104. Substrate contacts are provided by residues 105-106 (IT) and arginine 115.

It belongs to the type-II 3-dehydroquinase family. In terms of assembly, homododecamer. Adopts a ring-like structure, composed of an arrangement of two hexameric rings stacked on top of one another.

It catalyses the reaction 3-dehydroquinate = 3-dehydroshikimate + H2O. It participates in aromatic compound metabolism; 3,4-dihydroxybenzoate biosynthesis; 3,4-dihydroxybenzoate from 3-dehydroquinate: step 1/2. Is involved in the catabolism of quinate. Allows the utilization of quinate as carbon source via the beta-ketoadipate pathway. The protein is Catabolic 3-dehydroquinase of Scheffersomyces stipitis (strain ATCC 58785 / CBS 6054 / NBRC 10063 / NRRL Y-11545) (Yeast).